The chain runs to 181 residues: uncharacterized protein (181 aa).

Positions M1–A19 are cleaved as a signal peptide.

This is an uncharacterized protein from Treponema pallidum (strain Nichols).